The sequence spans 449 residues: GTP-binding protein A (449 aa).

Residues 1–77 form a disordered region; the sequence is MFNINPYKSK…LSSKTENSLS (77 aa). Low complexity-rich tracts occupy residues 8–46 and 67–77; these read KSKT…SSSS and SLSSKTENSLS. The region spanning 149–386 is the AIG1-type G domain; the sequence is QNECNVLLLG…FMGHLRAKNK (238 aa). The tract at residues 158–165 is G1; sequence GRTGVGKS. 158–165 is a binding site for GTP; sequence GRTGVGKS. The G2 stretch occupies residues 183-187; sequence SCTQD. The interval 204-207 is G3; that stretch reads DTPG. The segment at 275–278 is G4; sequence TYAN. A G5 region spans residues 336-338; it reads ENS.

The protein belongs to the TRAFAC class TrmE-Era-EngA-EngB-Septin-like GTPase superfamily. AIG1/Toc34/Toc159-like paraseptin GTPase family. IAN subfamily.

The chain is GTP-binding protein A (gtpA) from Dictyostelium discoideum (Social amoeba).